The primary structure comprises 432 residues: Acyl-CoA dehydrogenase AFT10-1 (432 aa).

Belongs to the acyl-CoA dehydrogenase family. Requires FAD as cofactor.

It functions in the pathway mycotoxin biosynthesis. In terms of biological role, acyl-CoA dehydrogenase; part of the gene clusters that mediate the biosynthesis of the host-selective toxins (HSTs) AF-toxins responsible for Alternaria black spot of strawberry disease by the strawberry pathotype. AF-toxin I and III are valine derivatives of 2,3-dyhydroxy-isovaleric acid and 2-hydroxy-isovaleric acid respectively, while AF II is an isoleucine derivative of 2-hydroxy-valeric acid. These derivatives are bound to a 9,10-epoxy-8-hydroxy-9-methyl-decatrienoic acid (EDA) moiety. On cellular level, AF-toxins affect plasma membrane of susceptible cells and cause a sudden increase in loss of K(+) after a few minutes of toxin treatment. The aldo-keto reductase AFTS1 catalyzes the conversion of 2-keto-isovaleric acid (2-KIV) to 2-hydroxy-isovaleric acid (2-HIV) by reduction of its ketone to an alcohol. The acyl-CoA ligase AFT1, the hydrolase AFT2 and the enoyl-CoA hydratases AFT3 and AFT6, but also the polyketide synthase AFT9, the acyl-CoA dehydrogenase AFT10, the cytochrome P450 monooxygenase AFT11 and the oxidoreductase AFT12 are all involved in the biosynthesis of the AK-, AF- and ACT-toxin common EDA structural moiety. The exact function of each enzyme, and of additional enzymes identified within the AF-toxin clusters have still to be determined. This Alternaria alternata (Alternaria rot fungus) protein is Acyl-CoA dehydrogenase AFT10-1.